We begin with the raw amino-acid sequence, 199 residues long: Hematopoietic prostaglandin D synthase (199 aa).

The GST N-terminal domain maps to 2 to 79 (PNYKLLYFNM…YLTKNTDLAG (78 aa)). Residues Y8, R14, W39, 49–51 (GKI), and 63–64 (QS) contribute to the glutathione site. The GST C-terminal domain maps to 81-199 (TELEQCQVDA…WILKRPQTKL (119 aa)).

The protein belongs to the GST superfamily. Sigma family. In terms of assembly, homodimer. Glutathione is required as a cofactor. Highly expressed in spleen and bone marrow. Lower levels of expression in small intestine, colon, liver, pancreas and skin. Not detected in brain, heart, lung or kidney (at protein level).

The protein localises to the cytoplasm. The enzyme catalyses prostaglandin H2 = prostaglandin D2. It carries out the reaction RX + glutathione = an S-substituted glutathione + a halide anion + H(+). It catalyses the reaction 2-glyceryl-prostaglandin H2 = 2-glyceryl-prostaglandin D2. Bifunctional enzyme which catalyzes both the conversion of PGH2 to PGD2, a prostaglandin involved in smooth muscle contraction/relaxation and a potent inhibitor of platelet aggregation, and the conjugation of glutathione with a wide range of aryl halides and organic isothiocyanates. Also exhibits low glutathione-peroxidase activity towards cumene hydroperoxide. This chain is Hematopoietic prostaglandin D synthase, found in Rattus norvegicus (Rat).